The primary structure comprises 234 residues: Interleukin-34 (234 aa).

An N-terminal signal peptide occupies residues 1-20; it reads MPQGLAWLRYLGILLGMALG. N76 carries an N-linked (GlcNAc...) asparagine glycan. The segment at 191 to 234 is disordered; sequence EAPQPQPRSPASAQCEAAQLYPLPQPPSTSLPRVLGPSAGPPTQ.

The protein belongs to the IL-34 family. As to quaternary structure, homodimer. Interacts with CSF1R.

It localises to the secreted. In terms of biological role, cytokine that promotes the proliferation, survival and differentiation of monocytes and macrophages. Promotes the release of pro-inflammatory chemokines, and thereby plays an important role in innate immunity and in inflammatory processes. Plays an important role in the regulation of osteoclast proliferation and differentiation, and in the regulation of bone resorption. Signaling via CSF1R and its downstream effectors stimulates phosphorylation of MAPK1/ERK2 AND MAPK3/ERK1. This Bos taurus (Bovine) protein is Interleukin-34.